The primary structure comprises 296 residues: MNLRDFFVITTWWGKILGAFFGYLTAGPVGALFGILVGNFFDRGLVSYYSNPHWLYHAEKQRIVQKAFFEATFSIMGHVAKSDGRVSEQEISMAKSIMNEMKLSKGQKDLAKRLFNEGKQADFNVSLALIQLQRICKDNRDLLKLFVDIQYRAAQVDGLSSQKIHALDNIFTHLGFAPLHKQYRFYEDFGSYFQQEQSKQHYHNQQEYKHTSSSQGQQGYKPQSPPNTLAHAFALLEVSPNANKQEVRRAYRRLLSRNHPDKLIAQGLPEEMIKLANDKTHQIMKAYELICETKGW.

Topologically, residues 1–15 (MNLRDFFVITTWWGK) are periplasmic. The helical transmembrane segment at 16-39 (ILGAFFGYLTAGPVGALFGILVGN) threads the bilayer. Topologically, residues 40–296 (FFDRGLVSYY…YELICETKGW (257 aa)) are cytoplasmic. A disordered region spans residues 200-225 (QHYHNQQEYKHTSSSQGQQGYKPQSP). Polar residues predominate over residues 211-221 (TSSSQGQQGYK). The region spanning 231–296 (HAFALLEVSP…YELICETKGW (66 aa)) is the J domain.

As to quaternary structure, homodimer.

It is found in the cell inner membrane. Its function is as follows. Regulatory DnaK co-chaperone. Direct interaction between DnaK and DjlA is needed for the induction of the wcaABCDE operon, involved in the synthesis of a colanic acid polysaccharide capsule, possibly through activation of the RcsB/RcsC phosphotransfer signaling pathway. The colanic acid capsule may help the bacterium survive conditions outside the host. This is Co-chaperone protein DjlA from Legionella pneumophila subsp. pneumophila (strain Philadelphia 1 / ATCC 33152 / DSM 7513).